Consider the following 576-residue polypeptide: Putative export ATP-binding/permease protein RC1073 (576 aa).

Residues 20–303 (LIIVMISLLS…IFELLSEMHL (284 aa)) enclose the ABC transmembrane type-1 domain. 6 consecutive transmembrane segments (helical) span residues 21–41 (IIVM…GSVF), 57–77 (VDNS…ASFF), 135–155 (FLSF…LMFF), 158–178 (FKLA…LIKF), 242–262 (ALFF…VVWI), and 277–297 (IISF…IFEL). The ABC transporter domain occupies 336–572 (IEFKNVDFTY…SEIYRNICRE (237 aa)). 371-378 (GRSGAGKS) contacts ATP.

Belongs to the ABC transporter superfamily. As to quaternary structure, homodimer.

It localises to the cell inner membrane. Functionally, part of an ABC transporter complex. Transmembrane domains (TMD) form a pore in the inner membrane and the ATP-binding domain (NBD) is responsible for energy generation. The sequence is that of Putative export ATP-binding/permease protein RC1073 from Rickettsia conorii (strain ATCC VR-613 / Malish 7).